The chain runs to 237 residues: Phosphoribosylaminoimidazole-succinocarboxamide synthase (237 aa).

Belongs to the SAICAR synthetase family.

It carries out the reaction 5-amino-1-(5-phospho-D-ribosyl)imidazole-4-carboxylate + L-aspartate + ATP = (2S)-2-[5-amino-1-(5-phospho-beta-D-ribosyl)imidazole-4-carboxamido]succinate + ADP + phosphate + 2 H(+). It participates in purine metabolism; IMP biosynthesis via de novo pathway; 5-amino-1-(5-phospho-D-ribosyl)imidazole-4-carboxamide from 5-amino-1-(5-phospho-D-ribosyl)imidazole-4-carboxylate: step 1/2. The chain is Phosphoribosylaminoimidazole-succinocarboxamide synthase from Methanosarcina acetivorans (strain ATCC 35395 / DSM 2834 / JCM 12185 / C2A).